A 414-amino-acid polypeptide reads, in one-letter code: Ciliary microtubule-associated protein 2 (414 aa).

The protein is Ciliary microtubule-associated protein 2 (Cimap2) of Mus musculus (Mouse).